The primary structure comprises 417 residues: Gamma-glutamyl phosphate reductase (417 aa).

Belongs to the gamma-glutamyl phosphate reductase family.

It localises to the cytoplasm. The catalysed reaction is L-glutamate 5-semialdehyde + phosphate + NADP(+) = L-glutamyl 5-phosphate + NADPH + H(+). It functions in the pathway amino-acid biosynthesis; L-proline biosynthesis; L-glutamate 5-semialdehyde from L-glutamate: step 2/2. Its function is as follows. Catalyzes the NADPH-dependent reduction of L-glutamate 5-phosphate into L-glutamate 5-semialdehyde and phosphate. The product spontaneously undergoes cyclization to form 1-pyrroline-5-carboxylate. The protein is Gamma-glutamyl phosphate reductase of Aeromonas salmonicida (strain A449).